The chain runs to 222 residues: MSSLSKEAVLVHEALVARGLETPMRAPVQEIDNETRKRLITGHMTEIMQLLNLDLSDDSLMETPHRIAKMYVDEIFSGLDYSRFPKITVIENKMKVDEMVTVRDITLTSTCEHHFVTIDGKATVAYIPKDAVIGLSKINRIVQFFAQRPQVQERLTQQILIALQTLLGTSNVAVSIDAVHYCVKARGIRDATSATTTTSLGGLFKSSQNTRQEFLRAVRHHN.

C111, H114, and C182 together coordinate Zn(2+).

The protein belongs to the GTP cyclohydrolase I family. As to quaternary structure, homomer.

It catalyses the reaction GTP + H2O = 7,8-dihydroneopterin 3'-triphosphate + formate + H(+). It participates in cofactor biosynthesis; 7,8-dihydroneopterin triphosphate biosynthesis; 7,8-dihydroneopterin triphosphate from GTP: step 1/1. This is GTP cyclohydrolase 1 from Klebsiella pneumoniae (strain 342).